The chain runs to 470 residues: Argininosuccinate lyase (470 aa).

Belongs to the lyase 1 family. Argininosuccinate lyase subfamily.

The protein localises to the cytoplasm. It carries out the reaction 2-(N(omega)-L-arginino)succinate = fumarate + L-arginine. Its pathway is amino-acid biosynthesis; L-arginine biosynthesis; L-arginine from L-ornithine and carbamoyl phosphate: step 3/3. The sequence is that of Argininosuccinate lyase from Leptospira interrogans serogroup Icterohaemorrhagiae serovar copenhageni (strain Fiocruz L1-130).